The sequence spans 503 residues: Aromatase (503 aa).

3 helical membrane passes run glutamate 19–tryptophan 39, glycine 51–glycine 71, and methionine 303–alanine 323. The substrate site is built by aspartate 309 and methionine 374. Cysteine 437 is a binding site for heme.

It belongs to the cytochrome P450 family. Requires heme as cofactor.

The protein resides in the endoplasmic reticulum membrane. The protein localises to the microsome membrane. The enzyme catalyses testosterone + 3 reduced [NADPH--hemoprotein reductase] + 3 O2 = 17beta-estradiol + formate + 3 oxidized [NADPH--hemoprotein reductase] + 4 H2O + 4 H(+). The catalysed reaction is androst-4-ene-3,17-dione + 3 reduced [NADPH--hemoprotein reductase] + 3 O2 = estrone + formate + 3 oxidized [NADPH--hemoprotein reductase] + 4 H2O + 4 H(+). It catalyses the reaction androst-4-ene-3,17-dione + reduced [NADPH--hemoprotein reductase] + O2 = 19-hydroxyandrost-4-ene-3,17-dione + oxidized [NADPH--hemoprotein reductase] + H2O + H(+). It carries out the reaction 19-hydroxyandrost-4-ene-3,17-dione + reduced [NADPH--hemoprotein reductase] + O2 = 19-oxo-androst-4-ene-3,17-dione + oxidized [NADPH--hemoprotein reductase] + 2 H2O + H(+). The enzyme catalyses 19-oxo-androst-4-ene-3,17-dione + reduced [NADPH--hemoprotein reductase] + O2 = estrone + formate + oxidized [NADPH--hemoprotein reductase] + H2O + 2 H(+). The catalysed reaction is estrone + reduced [NADPH--hemoprotein reductase] + O2 = 2-hydroxyestrone + oxidized [NADPH--hemoprotein reductase] + H2O + H(+). It catalyses the reaction 17beta-hydroxy-5alpha-androstan-3-one + reduced [NADPH--hemoprotein reductase] + O2 = 17beta,19-dihydroxy-3-oxo-5alpha-androstanone + oxidized [NADPH--hemoprotein reductase] + H2O + H(+). It carries out the reaction 17beta,19-dihydroxy-3-oxo-5alpha-androstanone + reduced [NADPH--hemoprotein reductase] + O2 = 17beta-hydroxy-3,19-dioxo-5alpha-androstanone + oxidized [NADPH--hemoprotein reductase] + 2 H2O + H(+). The enzyme catalyses 17beta-hydroxy-3,19-dioxo-5alpha-androstanone + reduced [NADPH--hemoprotein reductase] + O2 = 17beta-hydroxy-3-oxo-19-nor-5alpha-androst-1-ene + formate + oxidized [NADPH--hemoprotein reductase] + H2O + 2 H(+). It participates in steroid hormone biosynthesis. Its function is as follows. A cytochrome P450 monooxygenase that catalyzes the conversion of C19 androgens, androst-4-ene-3,17-dione (androstenedione) and testosterone to the C18 estrogens, estrone and estradiol, respectively. Catalyzes three successive oxidations of C19 androgens: two conventional oxidations at C19 yielding 19-hydroxy and 19-oxo/19-aldehyde derivatives, followed by a third oxidative aromatization step that involves C1-beta hydrogen abstraction combined with cleavage of the C10-C19 bond to yield a phenolic A ring and formic acid. Alternatively, the third oxidative reaction yields a 19-norsteroid and formic acid. Converts dihydrotestosterone to delta1,10-dehydro 19-nordihydrotestosterone and may play a role in homeostasis of this potent androgen. Also displays 2-hydroxylase activity toward estrone. Mechanistically, uses molecular oxygen inserting one oxygen atom into a substrate, and reducing the second into a water molecule, with two electrons provided by NADPH via cytochrome P450 reductase (CPR; NADPH-ferrihemoprotein reductase). The chain is Aromatase (CYP19A1) from Canis lupus familiaris (Dog).